The sequence spans 554 residues: Serine/threonine-protein kinase ROP18 (554 aa).

A helical transmembrane segment spans residues 17–40 (GLATLLPKTACLAGLNVALVFLLF). Residues 252-531 (LVRGAPLGSG…PLQALETAAF (280 aa)) enclose the Protein kinase domain. 3 residues coordinate ATP: glycine 262, alanine 264, and lysine 281. N-linked (GlcNAc...) asparagine glycosylation occurs at asparagine 306. ATP-binding residues include methionine 357, alanine 359, and aspartate 362. Asparagine 377 carries an N-linked (GlcNAc...) asparagine glycan. Residue aspartate 409 is the Proton acceptor of the active site. ATP is bound at residue aspartate 427. Residue aspartate 427 participates in Mg(2+) binding. N-linked (GlcNAc...) asparagine glycosylation is present at asparagine 434. Cysteine 478 and cysteine 497 form a disulfide bridge.

It belongs to the protein kinase superfamily. Ser/Thr protein kinase family. In terms of assembly, component of a complex at least composed of ROP18, GRA7 and ROP2. Component of a complex at least composed of ROP18 and ROP5. Interacts with GRA7 in the absence of ROP5. Interacts with mouse IRGB6 (TGTP1/TGTP2).

Its subcellular location is the parasitophorous vacuole membrane. The protein localises to the cytoplasmic vesicle. It localises to the secretory vesicle. The protein resides in the rhoptry. The catalysed reaction is L-threonyl-[protein] + ATP = O-phospho-L-threonyl-[protein] + ADP + H(+). It carries out the reaction L-seryl-[protein] + ATP = O-phospho-L-seryl-[protein] + ADP + H(+). Its activity is regulated as follows. Kinase activity is enhanced by polymorphic pseudokinase ROP5. Functionally, protein kinase. Virulence factor. Mediates parasite survival in mouse macrophages and monocytes. Reduces the accumulation of mouse IRGA6 (IIGP1) and IRGB6 (TGTP1/TGTP2), immunity-related GTPases (IRGs) that protect mice from infection by certain intracellular pathogens, on the parasitophorous vacuole and IRG-mediated killing of parasites by mouse cells; probably in connection with ROP5. In complex with GRA7, targets IRGs to prevent IRG-mediated parasite killing by mouse cells. Phosphorylates mouse IRGA6 (IIGP1); its activity toward mouse IRGA6 is promoted by GRA7 or ROP5. Phosphorylates mouse IRGB6 (TGTP1/TGTP2). Phosphorylates mouse IRGB10 (GM12250). Does not affect IFN-gamma (IFNG)-mediated parasite killing in human cells that do not possess the large variety of IRGs. The protein is Serine/threonine-protein kinase ROP18 of Toxoplasma gondii.